The primary structure comprises 162 residues: Protein NrdI (162 aa).

The protein belongs to the NrdI family.

In terms of biological role, probably involved in ribonucleotide reductase function. The sequence is that of Protein NrdI from Streptococcus pyogenes serotype M1.